We begin with the raw amino-acid sequence, 351 residues long: V-type proton ATPase subunit d1 (351 aa).

It belongs to the V-ATPase V0D/AC39 subunit family. As to quaternary structure, V-ATPase is a heteromultimeric enzyme composed of a peripheral catalytic V1 complex (components A to H) attached to an integral membrane V0 proton pore complex (components: a, c, c'', d and e).

The protein localises to the vacuole membrane. Its function is as follows. Subunit of the integral membrane V0 complex of vacuolar ATPase. Vacuolar ATPase is responsible for acidifying a variety of intracellular compartments in eukaryotic cells, thus providing most of the energy required for transport processes in the vacuolar system. This is V-type proton ATPase subunit d1 (VHA-d1) from Arabidopsis thaliana (Mouse-ear cress).